The following is a 194-amino-acid chain: Ribonuclease VapC1 (194 aa).

The region spanning 34-134 is the PINc domain; that stretch reads YVIDTSAIIS…TDDYSIQNVA (101 aa). Mg(2+) contacts are provided by Asp37 and Asp150.

It belongs to the PINc/VapC protein family. Mg(2+) serves as cofactor.

In terms of biological role, toxic component of a type II toxin-antitoxin (TA) system. An RNase. The sequence is that of Ribonuclease VapC1 from Thermoplasma acidophilum (strain ATCC 25905 / DSM 1728 / JCM 9062 / NBRC 15155 / AMRC-C165).